We begin with the raw amino-acid sequence, 548 residues long: Hydroxylamine reductase (548 aa).

Residues cysteine 3, cysteine 6, cysteine 15, and cysteine 21 each coordinate [4Fe-4S] cluster. Histidine 239, glutamate 263, cysteine 307, cysteine 401, cysteine 429, cysteine 454, glutamate 489, and lysine 491 together coordinate hybrid [4Fe-2O-2S] cluster. Residue cysteine 401 is modified to Cysteine persulfide.

This sequence belongs to the HCP family. [4Fe-4S] cluster serves as cofactor. Requires hybrid [4Fe-2O-2S] cluster as cofactor.

It localises to the cytoplasm. It carries out the reaction A + NH4(+) + H2O = hydroxylamine + AH2 + H(+). Functionally, catalyzes the reduction of hydroxylamine to form NH(3) and H(2)O. In Desulfosudis oleivorans (strain DSM 6200 / JCM 39069 / Hxd3) (Desulfococcus oleovorans), this protein is Hydroxylamine reductase.